The sequence spans 84 residues: Limulin (84 aa).

One can recognise a Pentraxin (PTX) domain in the interval 6–84 (ITSKVKFPPS…DEQGDFLFNV (79 aa)). Ca(2+) contacts are provided by D67 and N68.

The protein belongs to the pentraxin family. In terms of assembly, homopentamer. Pentraxin (or pentaxin) have a discoid arrangement of 5 non-covalently bound subunits. It depends on Ca(2+) as a cofactor. In terms of processing, a disulfide bond links Cys-38 to a Cys in the C-terminal half of the chain of 163 residues.

In terms of biological role, lectin that binds sialic acid. Displays antiviral activity and therefore may contribute to defense against infections. In Limulus polyphemus (Atlantic horseshoe crab), this protein is Limulin.